Here is an 833-residue protein sequence, read N- to C-terminus: DNA helicase MCM8 (833 aa).

Residues 395–602 (LLKLVVNSLC…QHDHLLSEHV (208 aa)) enclose the MCM domain. 447 to 454 (GDPGLGKS) serves as a coordination point for ATP. S623 carries the post-translational modification Phosphoserine.

The protein belongs to the MCM family. As to quaternary structure, component of the MCM8-MCM9 complex, which forms a hexamer composed of MCM8 and MCM9. Interacts with the DNA mismatch repair (MMR) complex composed at least of MSH2, MSH3, MSH6, PMS1 and MLH1. Interacts with RAD51; the interaction recruits RAD51 to DNA damage sites. Interacts with the MRN complex composed of MRE11, RAD50 and NBN/NBS1. Interacts with CDC6 and ORC2. Interacts with HROB; the interaction recruits the MCM8-MCM9 complex to DNA damage sites.

Its subcellular location is the nucleus. The protein localises to the chromosome. It catalyses the reaction ATP + H2O = ADP + phosphate + H(+). In terms of biological role, component of the MCM8-MCM9 complex, a complex involved in the repair of double-stranded DNA breaks (DBSs) and DNA interstrand cross-links (ICLs) by homologous recombination (HR). Required for DNA resection by the MRE11-RAD50-NBN/NBS1 (MRN) complex by recruiting the MRN complex to the repair site and by promoting the complex nuclease activity. Probably by regulating the localization of the MNR complex, indirectly regulates the recruitment of downstream effector RAD51 to DNA damage sites including DBSs and ICLs. The MCM8-MCM9 complex is dispensable for DNA replication and S phase progression. However, may play a non-essential for DNA replication: may be involved in the activation of the prereplicative complex (pre-RC) during G(1) phase by recruiting CDC6 to the origin recognition complex (ORC). Probably by regulating HR, plays a key role during gametogenesis. Stabilizes MCM9 protein. The protein is DNA helicase MCM8 (Mcm8) of Mus musculus (Mouse).